Reading from the N-terminus, the 101-residue chain is NAD(P)H-quinone oxidoreductase subunit 4L, chloroplastic (101 aa).

3 consecutive transmembrane segments (helical) span residues 2–22, 32–52, and 61–81; these read MLEH…YGLI, MCLE…SDLF, and IFSI…LAIV.

The protein belongs to the complex I subunit 4L family. NDH is composed of at least 16 different subunits, 5 of which are encoded in the nucleus.

The protein localises to the plastid. It is found in the chloroplast thylakoid membrane. The enzyme catalyses a plastoquinone + NADH + (n+1) H(+)(in) = a plastoquinol + NAD(+) + n H(+)(out). It carries out the reaction a plastoquinone + NADPH + (n+1) H(+)(in) = a plastoquinol + NADP(+) + n H(+)(out). NDH shuttles electrons from NAD(P)H:plastoquinone, via FMN and iron-sulfur (Fe-S) centers, to quinones in the photosynthetic chain and possibly in a chloroplast respiratory chain. The immediate electron acceptor for the enzyme in this species is believed to be plastoquinone. Couples the redox reaction to proton translocation, and thus conserves the redox energy in a proton gradient. The polypeptide is NAD(P)H-quinone oxidoreductase subunit 4L, chloroplastic (Nandina domestica (Heavenly bamboo)).